A 1521-amino-acid chain; its full sequence is Probable DNA topoisomerase 2 (1521 aa).

Acidic residues predominate over residues 1–10; sequence MSDSENDYSD. The interval 1–87 is disordered; the sequence is MSDSENDYSD…DDKSSSSDNE (87 aa). The span at 36 to 48 shows a compositional bias: basic residues; the sequence is SKKKASATRKPAA. Residues 49–62 show a composition bias toward low complexity; that stretch reads KKATTTTTSTTKKS. ATP contacts are provided by residues asparagine 163, asparagine 192, 220 to 222, and 233 to 240; these read SSH and GRNGFGAK. The segment at 412-414 is interaction with DNA; that stretch reads NKK. 446-448 serves as a coordination point for ATP; that stretch reads QTK. In terms of domain architecture, Toprim spans 527–640; sequence CTLILTEGDS…TLLRMPGFLV (114 aa). Residues glutamate 533, aspartate 609, and aspartate 611 each coordinate Mg(2+). One can recognise a Topo IIA-type catalytic domain in the interval 771–1273; sequence IPNIVDGLKT…PIQEIYKRDL (503 aa). Tyrosine 861 functions as the O-(5'-phospho-DNA)-tyrosine intermediate in the catalytic mechanism. The tract at residues 1007 to 1047 is disordered; it reads GTRKKKKEEKEKKAASRKGTKAKPTTTKRSKRVDDDDDNEK. Basic residues predominate over residues 1021–1037; the sequence is ASRKGTKAKPTTTKRSK. The interaction with DNA stretch occupies residues 1085-1094; sequence KLVSTINETN. Disordered regions lie at residues 1192-1222 and 1335-1521; these read KIKKKKNAFDEEDAAISSDEEKDGAQEEQDD and IPTT…SDSD. Residues 1201-1222 show a composition bias toward acidic residues; sequence DEEDAAISSDEEKDGAQEEQDD. A compositionally biased stretch (low complexity) spans 1354–1368; sequence TTSTSTSTTTSSNTK. Residues 1422–1438 show a composition bias toward acidic residues; sequence LSDESDQESDQESDQGS. Positions 1454–1467 are enriched in low complexity; the sequence is PTTIATKKATTSKS. A compositionally biased stretch (basic and acidic residues) spans 1468–1480; the sequence is KVIDDKSSDDEVI. The span at 1503-1521 shows a compositional bias: acidic residues; sequence SDSDDDDLYDNEESSSDSD.

The protein belongs to the type II topoisomerase family. Homodimer. Mg(2+) serves as cofactor. It depends on Mn(2+) as a cofactor. The cofactor is Ca(2+).

The protein resides in the nucleus. The enzyme catalyses ATP-dependent breakage, passage and rejoining of double-stranded DNA.. In terms of biological role, control of topological states of DNA by transient breakage and subsequent rejoining of DNA strands. Topoisomerase II makes double-strand breaks. In Dictyostelium discoideum (Social amoeba), this protein is Probable DNA topoisomerase 2 (top2).